A 179-amino-acid chain; its full sequence is Large ribosomal subunit protein uL5 (179 aa).

The protein belongs to the universal ribosomal protein uL5 family. In terms of assembly, part of the 50S ribosomal subunit; part of the 5S rRNA/L5/L18/L25 subcomplex. Contacts the 5S rRNA and the P site tRNA. Forms a bridge to the 30S subunit in the 70S ribosome.

This is one of the proteins that bind and probably mediate the attachment of the 5S RNA into the large ribosomal subunit, where it forms part of the central protuberance. In the 70S ribosome it contacts protein S13 of the 30S subunit (bridge B1b), connecting the 2 subunits; this bridge is implicated in subunit movement. Contacts the P site tRNA; the 5S rRNA and some of its associated proteins might help stabilize positioning of ribosome-bound tRNAs. This is Large ribosomal subunit protein uL5 from Glaesserella parasuis serovar 5 (strain SH0165) (Haemophilus parasuis).